The following is a 348-amino-acid chain: Erythronate-4-phosphate dehydrogenase (348 aa).

2 residues coordinate substrate: T46 and T67. Residue D147 coordinates NAD(+). R209 is an active-site residue. Residue D233 participates in NAD(+) binding. Residue E238 is part of the active site. The active-site Proton donor is H255. Position 258 (G258) interacts with NAD(+). Y259 lines the substrate pocket.

It belongs to the D-isomer specific 2-hydroxyacid dehydrogenase family. PdxB subfamily. Homodimer.

It is found in the cytoplasm. The enzyme catalyses 4-phospho-D-erythronate + NAD(+) = (R)-3-hydroxy-2-oxo-4-phosphooxybutanoate + NADH + H(+). It participates in cofactor biosynthesis; pyridoxine 5'-phosphate biosynthesis; pyridoxine 5'-phosphate from D-erythrose 4-phosphate: step 2/5. Catalyzes the oxidation of erythronate-4-phosphate to 3-hydroxy-2-oxo-4-phosphonooxybutanoate. This chain is Erythronate-4-phosphate dehydrogenase, found in Bacteroides fragilis (strain ATCC 25285 / DSM 2151 / CCUG 4856 / JCM 11019 / LMG 10263 / NCTC 9343 / Onslow / VPI 2553 / EN-2).